Here is a 41-residue protein sequence, read N- to C-terminus: U15-myrmicitoxin-Tb1b (41 aa).

Positions 1–25 are cleaved as a signal peptide; the sequence is MKIVKLITIFAMIATLMVTVTNGEA. Histidine amide is present on His40.

Expressed by the venom gland.

The protein localises to the secreted. In terms of biological role, venom protein with unknown function. Does not induce paralysis when a high dose is administered by intrathoracic injection into the blowfly Lucilia caesar. This chain is U15-myrmicitoxin-Tb1b, found in Tetramorium bicarinatum (Tramp ant).